A 193-amino-acid polypeptide reads, in one-letter code: Signal peptidase I (193 aa).

The Cytoplasmic segment spans residues Met1 to Lys25. The chain crosses the membrane as a helical span at residues Ala26–Phe42. Over Glu43–Lys193 the chain is Extracellular. Residues Ser51 and Lys93 contribute to the active site.

This sequence belongs to the peptidase S26 family.

Its subcellular location is the cell membrane. The enzyme catalyses Cleavage of hydrophobic, N-terminal signal or leader sequences from secreted and periplasmic proteins.. This chain is Signal peptidase I (sipS2), found in Bacillus amyloliquefaciens (Bacillus velezensis).